We begin with the raw amino-acid sequence, 136 residues long: Small ribosomal subunit protein uS11c (136 aa).

The protein belongs to the universal ribosomal protein uS11 family. As to quaternary structure, part of the 30S ribosomal subunit.

It localises to the plastid. It is found in the chloroplast. The polypeptide is Small ribosomal subunit protein uS11c (Helianthus annuus (Common sunflower)).